The following is a 415-amino-acid chain: Squalene synthase 11 (415 aa).

2 helical membrane passes run 281–301 (AIFRFCAIPQIMAIGTLALCF) and 392–412 (LIIILFIILAILYAYLSSNLP).

The protein belongs to the phytoene/squalene synthase family. It depends on Mg(2+) as a cofactor. Requires Mn(2+) as cofactor.

The protein resides in the endoplasmic reticulum membrane. It carries out the reaction 2 (2E,6E)-farnesyl diphosphate + NADH + H(+) = squalene + 2 diphosphate + NAD(+). The catalysed reaction is 2 (2E,6E)-farnesyl diphosphate + NADPH + H(+) = squalene + 2 diphosphate + NADP(+). Its pathway is terpene metabolism; lanosterol biosynthesis; lanosterol from farnesyl diphosphate: step 1/3. Component of the triterpene saponins (e.g. ginsenosides or panaxosides) and phytosterols biosynthetic pathways. Catalyzes the biosynthesis of squalene. This chain is Squalene synthase 11, found in Panax ginseng (Korean ginseng).